Here is a 425-residue protein sequence, read N- to C-terminus: MCDRNGGRRLRQWLIEQIDSEQYPGLIWENEEKTMFRIPWKHAGKQDYNQEVDASIFKAWAVFKGKFKEGDKAEPATWKTRLRCALNKSPDFEEVTDRSQLDISEPYKVYRIVPEEEQKCKIGVGNGSSLTDVGDMDCSPSAIDDLMKEPPCVDEYLGIIKRSPSPPQETCRNPPIPDWWMQQPSPSLPLVNGYTGYEQHHSGYSQMVITFFYSGRLVGHITTSYPEGCRLSLSQPSNHGEKLYTPDSLEHVRFPSAEAIQNDRQKQITKKLFGHLERGVLLHSNKQGIFIKRLCQGRVFWSGNTVVYKDRPSKLDRDEVVKIFDTNLFFRELQQYYNNQGRFPDSRVMLCFGEEFPDTVPLRCKLILVQVEQLCVRQVMEEAGKTCSSPMLPDDVQQEQVYRIFQDICGPHQRPLFRENQQIAV.

The IRF tryptophan pentad repeat DNA-binding region spans 7-114; the sequence is GRRLRQWLIE…EPYKVYRIVP (108 aa).

The protein belongs to the IRF family.

The protein localises to the nucleus. It is found in the cytoplasm. Functionally, plays a role as a transcriptional activator or repressor. Specifically binds to the upstream regulatory region of type I IFN and IFN-inducible MHC class I genes (the interferon consensus sequence (ICS)). Plays a regulatory role in cells of the immune system. The sequence is that of Interferon regulatory factor 8 (IRF8) from Gallus gallus (Chicken).